A 209-amino-acid polypeptide reads, in one-letter code: Uracil phosphoribosyltransferase (209 aa).

Residues Arg-79, Arg-104, and 131–139 contribute to the 5-phospho-alpha-D-ribose 1-diphosphate site; that span reads DPMLATGGS. Residues Ile-194 and 199–201 each bind uracil; that span reads GDA. Asp-200 lines the 5-phospho-alpha-D-ribose 1-diphosphate pocket.

This sequence belongs to the UPRTase family. Requires Mg(2+) as cofactor.

The catalysed reaction is UMP + diphosphate = 5-phospho-alpha-D-ribose 1-diphosphate + uracil. The protein operates within pyrimidine metabolism; UMP biosynthesis via salvage pathway; UMP from uracil: step 1/1. Its activity is regulated as follows. Allosterically activated by GTP. In terms of biological role, catalyzes the conversion of uracil and 5-phospho-alpha-D-ribose 1-diphosphate (PRPP) to UMP and diphosphate. In Clostridium perfringens (strain SM101 / Type A), this protein is Uracil phosphoribosyltransferase.